Consider the following 452-residue polypeptide: Bone morphogenetic protein 5 (452 aa).

The signal sequence occupies residues 1 to 25 (MHWTVFLLRGIVGFLWSGWVQVGYA). Residues 26–314 (KGGLGDNHVH…ASEVLLRSVR (289 aa)) constitute a propeptide that is removed on maturation. 4 N-linked (GlcNAc...) asparagine glycosylation sites follow: Asn209, Asn325, Asn343, and Asn393. The interval 316-345 (ASKRKNQNRNKSNSHQDPSRMPSAGDYNTS) is disordered. Disulfide bonds link Cys351–Cys417, Cys380–Cys449, and Cys384–Cys451.

Belongs to the TGF-beta family. Interacts with ERFE; the interaction inhibits BMP-induced transcription of HAMP.

The protein localises to the secreted. Its function is as follows. Growth factor of the TGF-beta superfamily that plays essential roles in many developmental processes, including cartilage and bone formation or neurogenesis. Initiates the canonical BMP signaling cascade by associating with type I receptor BMPR1A and type II receptor BMPR2. In turn, BMPR1A propagates signal by phosphorylating SMAD1/5/8 that travel to the nucleus and act as activators and repressors of transcription of target genes. Can also signal through non-canonical pathway such as MAPK p38 signaling cascade to promote chondrogenic differentiation. Promotes the expression of HAMP, this is repressed by its interaction with ERFE. This Mus musculus (Mouse) protein is Bone morphogenetic protein 5 (Bmp5).